The primary structure comprises 307 residues: Elongation factor Ts (307 aa).

Residues 79–82 (TDFV) are involved in Mg(2+) ion dislocation from EF-Tu.

This sequence belongs to the EF-Ts family.

It localises to the cytoplasm. In terms of biological role, associates with the EF-Tu.GDP complex and induces the exchange of GDP to GTP. It remains bound to the aminoacyl-tRNA.EF-Tu.GTP complex up to the GTP hydrolysis stage on the ribosome. In Rhizobium meliloti (strain 1021) (Ensifer meliloti), this protein is Elongation factor Ts.